Consider the following 529-residue polypeptide: ATP synthase subunit alpha (529 aa).

173-180 (GDRQTGKT) provides a ligand contact to ATP.

It belongs to the ATPase alpha/beta chains family. In terms of assembly, F-type ATPases have 2 components, CF(1) - the catalytic core - and CF(0) - the membrane proton channel. CF(1) has five subunits: alpha(3), beta(3), gamma(1), delta(1), epsilon(1). CF(0) has three main subunits: a(1), b(2) and c(9-12). The alpha and beta chains form an alternating ring which encloses part of the gamma chain. CF(1) is attached to CF(0) by a central stalk formed by the gamma and epsilon chains, while a peripheral stalk is formed by the delta and b chains.

The protein localises to the cell membrane. It carries out the reaction ATP + H2O + 4 H(+)(in) = ADP + phosphate + 5 H(+)(out). Produces ATP from ADP in the presence of a proton gradient across the membrane. The alpha chain is a regulatory subunit. The polypeptide is ATP synthase subunit alpha (Streptomyces avermitilis (strain ATCC 31267 / DSM 46492 / JCM 5070 / NBRC 14893 / NCIMB 12804 / NRRL 8165 / MA-4680)).